We begin with the raw amino-acid sequence, 206 residues long: Probable GTP-binding protein EngB (206 aa).

An EngB-type G domain is found at 29–201; sequence ILPEVAVVGR…MIMIQDALND (173 aa). Residues 37–44, 64–68, 82–85, 149–152, and 180–182 contribute to the GTP site; these read GRSNVGKS, GKTQA, DLPG, TKID, and YSV. Mg(2+) is bound by residues S44 and T66.

The protein belongs to the TRAFAC class TrmE-Era-EngA-EngB-Septin-like GTPase superfamily. EngB GTPase family. The cofactor is Mg(2+).

Necessary for normal cell division and for the maintenance of normal septation. The sequence is that of Probable GTP-binding protein EngB from Protochlamydia amoebophila (strain UWE25).